The primary structure comprises 220 residues: Superoxide dismutase [Fe] (220 aa).

Fe cation contacts are provided by His-26, His-73, Asp-164, and His-168.

Belongs to the iron/manganese superoxide dismutase family. Homodimer. Requires Fe cation as cofactor.

The catalysed reaction is 2 superoxide + 2 H(+) = H2O2 + O2. Functionally, destroys superoxide anion radicals which are normally produced within the cells and which are toxic to biological systems. This is Superoxide dismutase [Fe] (sodB) from Campylobacter coli.